The chain runs to 273 residues: Homeobox protein HMX2 (273 aa).

A disordered region spans residues 1–152 (MGSKEDAGKG…RQAGAAKKKT (152 aa)). Gly residues predominate over residues 93–102 (KGSGGSGPGG). Residues 114–123 (SDFKEEKERL) are compositionally biased toward basic and acidic residues. Positions 149–208 (KKKTRTVFSRSQVYQLESTFDMKRYLSSSERACLASSLQLTETQVKTWFQNRRNKWKRQL) form a DNA-binding region, homeobox.

The protein belongs to the HMX homeobox family.

The protein resides in the nucleus. Its function is as follows. Transcription factor involved in specification of neuronal cell types and which is required for inner ear and hypothalamus development. The protein is Homeobox protein HMX2 (HMX2) of Homo sapiens (Human).